A 429-amino-acid chain; its full sequence is Ribosomal RNA small subunit methyltransferase B (429 aa).

S-adenosyl-L-methionine-binding positions include 254-260 (CAAPGGK), aspartate 277, aspartate 303, and aspartate 322. Catalysis depends on cysteine 375, which acts as the Nucleophile.

It belongs to the class I-like SAM-binding methyltransferase superfamily. RsmB/NOP family.

The protein resides in the cytoplasm. It carries out the reaction cytidine(967) in 16S rRNA + S-adenosyl-L-methionine = 5-methylcytidine(967) in 16S rRNA + S-adenosyl-L-homocysteine + H(+). Specifically methylates the cytosine at position 967 (m5C967) of 16S rRNA. This Escherichia coli O127:H6 (strain E2348/69 / EPEC) protein is Ribosomal RNA small subunit methyltransferase B.